The following is a 114-amino-acid chain: Photosystem II reaction center Psb28 protein (114 aa).

Belongs to the Psb28 family. In terms of assembly, part of the photosystem II complex.

It localises to the plastid. The protein resides in the chloroplast thylakoid membrane. This chain is Photosystem II reaction center Psb28 protein, found in Gracilaria tenuistipitata var. liui (Red alga).